Consider the following 158-residue polypeptide: Cyclic pyranopterin monophosphate synthase (158 aa).

Residues L75–H77 and M113–E114 contribute to the substrate site. The active site involves D128.

The protein belongs to the MoaC family. Homohexamer; trimer of dimers.

The catalysed reaction is (8S)-3',8-cyclo-7,8-dihydroguanosine 5'-triphosphate = cyclic pyranopterin phosphate + diphosphate. The protein operates within cofactor biosynthesis; molybdopterin biosynthesis. Catalyzes the conversion of (8S)-3',8-cyclo-7,8-dihydroguanosine 5'-triphosphate to cyclic pyranopterin monophosphate (cPMP). In Polynucleobacter asymbioticus (strain DSM 18221 / CIP 109841 / QLW-P1DMWA-1) (Polynucleobacter necessarius subsp. asymbioticus), this protein is Cyclic pyranopterin monophosphate synthase.